Here is a 207-residue protein sequence, read N- to C-terminus: Ribosomal RNA large subunit methyltransferase E (207 aa).

5 residues coordinate S-adenosyl-L-methionine: Gly61, Trp63, Asp81, Asp97, and Asp122. Residue Lys162 is the Proton acceptor of the active site.

This sequence belongs to the class I-like SAM-binding methyltransferase superfamily. RNA methyltransferase RlmE family.

The protein resides in the cytoplasm. It catalyses the reaction uridine(2552) in 23S rRNA + S-adenosyl-L-methionine = 2'-O-methyluridine(2552) in 23S rRNA + S-adenosyl-L-homocysteine + H(+). In terms of biological role, specifically methylates the uridine in position 2552 of 23S rRNA at the 2'-O position of the ribose in the fully assembled 50S ribosomal subunit. In Pseudomonas putida (strain ATCC 700007 / DSM 6899 / JCM 31910 / BCRC 17059 / LMG 24140 / F1), this protein is Ribosomal RNA large subunit methyltransferase E.